Reading from the N-terminus, the 979-residue chain is Glycine dehydrogenase (decarboxylating) (979 aa).

N6-(pyridoxal phosphate)lysine is present on Lys726.

This sequence belongs to the GcvP family. As to quaternary structure, the glycine cleavage system is composed of four proteins: P, T, L and H. Requires pyridoxal 5'-phosphate as cofactor.

The enzyme catalyses N(6)-[(R)-lipoyl]-L-lysyl-[glycine-cleavage complex H protein] + glycine + H(+) = N(6)-[(R)-S(8)-aminomethyldihydrolipoyl]-L-lysyl-[glycine-cleavage complex H protein] + CO2. The glycine cleavage system catalyzes the degradation of glycine. The P protein binds the alpha-amino group of glycine through its pyridoxal phosphate cofactor; CO(2) is released and the remaining methylamine moiety is then transferred to the lipoamide cofactor of the H protein. This chain is Glycine dehydrogenase (decarboxylating), found in Ralstonia pickettii (strain 12J).